The primary structure comprises 149 residues: Nucleoside diphosphate kinase (149 aa).

ATP is bound by residues Lys-9, Phe-57, Arg-85, Thr-91, Arg-102, and Asn-112. Residue His-115 is the Pros-phosphohistidine intermediate of the active site.

Belongs to the NDK family. As to quaternary structure, homotetramer. Requires Mg(2+) as cofactor.

The protein localises to the cytoplasm. It catalyses the reaction a 2'-deoxyribonucleoside 5'-diphosphate + ATP = a 2'-deoxyribonucleoside 5'-triphosphate + ADP. It carries out the reaction a ribonucleoside 5'-diphosphate + ATP = a ribonucleoside 5'-triphosphate + ADP. In terms of biological role, major role in the synthesis of nucleoside triphosphates other than ATP. The ATP gamma phosphate is transferred to the NDP beta phosphate via a ping-pong mechanism, using a phosphorylated active-site intermediate. This Staphylococcus aureus (strain Mu3 / ATCC 700698) protein is Nucleoside diphosphate kinase.